A 301-amino-acid polypeptide reads, in one-letter code: Mycothiol acetyltransferase (301 aa).

N-acetyltransferase domains follow at residues 7 to 150 (VDWQ…PPVD) and 152 to 301 (VRFA…AVEG). Asp39 lines the 1D-myo-inositol 2-(L-cysteinylamino)-2-deoxy-alpha-D-glucopyranoside pocket. Acetyl-CoA contacts are provided by residues 80-82 (LVV) and 88-93 (RRGIGS). Residues Glu179, Lys220, and Glu228 each coordinate 1D-myo-inositol 2-(L-cysteinylamino)-2-deoxy-alpha-D-glucopyranoside. Position 232-234 (232-234 (VGV)) interacts with acetyl-CoA. Tyr271 serves as a coordination point for 1D-myo-inositol 2-(L-cysteinylamino)-2-deoxy-alpha-D-glucopyranoside. 276 to 281 (NTAAVK) lines the acetyl-CoA pocket.

This sequence belongs to the acetyltransferase family. MshD subfamily. In terms of assembly, monomer.

The catalysed reaction is 1D-myo-inositol 2-(L-cysteinylamino)-2-deoxy-alpha-D-glucopyranoside + acetyl-CoA = mycothiol + CoA + H(+). In terms of biological role, catalyzes the transfer of acetyl from acetyl-CoA to desacetylmycothiol (Cys-GlcN-Ins) to form mycothiol. This chain is Mycothiol acetyltransferase, found in Mycolicibacterium vanbaalenii (strain DSM 7251 / JCM 13017 / BCRC 16820 / KCTC 9966 / NRRL B-24157 / PYR-1) (Mycobacterium vanbaalenii).